The chain runs to 495 residues: 3-octaprenyl-4-hydroxybenzoate carboxy-lyase (495 aa).

Residue Asn-172 coordinates Mn(2+). Residues 175–177 (IYR), 189–191 (RWL), and 194–195 (RG) each bind prenylated FMN. A Mn(2+)-binding site is contributed by Glu-238. The active-site Proton donor is the Asp-287.

The protein belongs to the UbiD family. Homohexamer. Prenylated FMN serves as cofactor. The cofactor is Mn(2+).

Its subcellular location is the cell membrane. The enzyme catalyses a 4-hydroxy-3-(all-trans-polyprenyl)benzoate + H(+) = a 2-(all-trans-polyprenyl)phenol + CO2. It participates in cofactor biosynthesis; ubiquinone biosynthesis. Catalyzes the decarboxylation of 3-octaprenyl-4-hydroxy benzoate to 2-octaprenylphenol, an intermediate step in ubiquinone biosynthesis. This chain is 3-octaprenyl-4-hydroxybenzoate carboxy-lyase, found in Yersinia pestis bv. Antiqua (strain Angola).